Reading from the N-terminus, the 690-residue chain is Polyphosphate kinase (690 aa).

Asn45 contributes to the ATP binding site. Arg375 and Arg405 together coordinate Mg(2+). Catalysis depends on His435, which acts as the Phosphohistidine intermediate. 3 residues coordinate ATP: Tyr468, Arg564, and His592.

It belongs to the polyphosphate kinase 1 (PPK1) family. It depends on Mg(2+) as a cofactor. An intermediate of this reaction is the autophosphorylated ppk in which a phosphate is covalently linked to a histidine residue through a N-P bond.

It catalyses the reaction [phosphate](n) + ATP = [phosphate](n+1) + ADP. Catalyzes the reversible transfer of the terminal phosphate of ATP to form a long-chain polyphosphate (polyP). In Pseudomonas aeruginosa (strain ATCC 15692 / DSM 22644 / CIP 104116 / JCM 14847 / LMG 12228 / 1C / PRS 101 / PAO1), this protein is Polyphosphate kinase.